The primary structure comprises 126 residues: Aspartate 1-decarboxylase (126 aa).

Ser-25 acts as the Schiff-base intermediate with substrate; via pyruvic acid in catalysis. Ser-25 is modified (pyruvic acid (Ser)). Thr-57 is a substrate binding site. Catalysis depends on Tyr-58, which acts as the Proton donor. Gly-73–Ala-75 contributes to the substrate binding site.

This sequence belongs to the PanD family. In terms of assembly, heterooctamer of four alpha and four beta subunits. Pyruvate is required as a cofactor. In terms of processing, is synthesized initially as an inactive proenzyme, which is activated by self-cleavage at a specific serine bond to produce a beta-subunit with a hydroxyl group at its C-terminus and an alpha-subunit with a pyruvoyl group at its N-terminus.

The protein localises to the cytoplasm. The enzyme catalyses L-aspartate + H(+) = beta-alanine + CO2. Its pathway is cofactor biosynthesis; (R)-pantothenate biosynthesis; beta-alanine from L-aspartate: step 1/1. Functionally, catalyzes the pyruvoyl-dependent decarboxylation of aspartate to produce beta-alanine. The sequence is that of Aspartate 1-decarboxylase from Thioalkalivibrio sulfidiphilus (strain HL-EbGR7).